A 474-amino-acid polypeptide reads, in one-letter code: MPMVLLECDKDIPERQKHIYLKAPNEDTREFLPIANAATIPGTLSERGCAFCGAKLVIGGVLKDTIQMIHGPLGCAYDTWHTKRYPTDNGHFNMKYVWSTDMKESHVVFGGEKRLEKSMHEAFDEMPDIKRMIVYTTCPTALIGDDIKAVAKKVMKDRPDVDVFTVECPGFSGVSQSKGHHVLNIGWINEKVETMEKEITSEYTMNFIGDFNIQGDTQLLQTYWDRLGIQVVAHFTGNGTYDDLRCMHQAQLNVVNCARSSGYIANELKKRYGIPRLDIDSWGFNYMAEGIRKICAFFGIEEKGEELIAEEYAKWKPKLDWYKERLQGKKMAIWTGGPRLWHWTKSVEDDLGVQVVAMSSKFGHEEDFEKVIARGKEGTYYIDDGNELEFFEIIDLVKPDVIFTGPRVGELVKKLHIPYVNGHGYHNGPYMGFEGFVNLARDMYNAVHNPLRHLAAVDIRDKSQTTPVIVRGAA.

Residues C49, C75, and C138 each coordinate [8Fe-7S] cluster. The [7Fe-V-9S-C-homocitryl] cluster site is built by C257 and H423.

The protein belongs to the NifD/NifK/NifE/NifN family. Hexamer of two alpha, two beta, and two delta chains. It depends on [8Fe-7S] cluster as a cofactor. [7Fe-V-9S-C-homocitryl] cluster is required as a cofactor.

It carries out the reaction N2 + 8 reduced [2Fe-2S]-[ferredoxin] + 16 ATP + 16 H2O = H2 + 8 oxidized [2Fe-2S]-[ferredoxin] + 2 NH4(+) + 16 ADP + 16 phosphate + 6 H(+). This vanadium-iron protein is part of the nitrogenase complex that catalyzes the key enzymatic reactions in nitrogen fixation. The chain is Nitrogenase vanadium-iron protein alpha chain (vnfD) from Azotobacter vinelandii.